A 434-amino-acid chain; its full sequence is Nicotinate phosphoribosyltransferase (434 aa).

A Phosphohistidine; by autocatalysis modification is found at His242.

The protein belongs to the NAPRTase family. In terms of processing, transiently phosphorylated on a His residue during the reaction cycle. Phosphorylation strongly increases the affinity for substrates and increases the rate of nicotinate D-ribonucleotide production. Dephosphorylation regenerates the low-affinity form of the enzyme, leading to product release.

It catalyses the reaction nicotinate + 5-phospho-alpha-D-ribose 1-diphosphate + ATP + H2O = nicotinate beta-D-ribonucleotide + ADP + phosphate + diphosphate. It functions in the pathway cofactor biosynthesis; NAD(+) biosynthesis; nicotinate D-ribonucleotide from nicotinate: step 1/1. In terms of biological role, catalyzes the synthesis of beta-nicotinate D-ribonucleotide from nicotinate and 5-phospho-D-ribose 1-phosphate at the expense of ATP. The sequence is that of Nicotinate phosphoribosyltransferase from Sinorhizobium fredii (strain NBRC 101917 / NGR234).